Reading from the N-terminus, the 600-residue chain is 1,8-cineole synthase 1, chloroplastic (600 aa).

The N-terminal 31 residues, 1–31 (MATLRISSALIYQNTLTHHFRLRRPHRFVCK), are a transit peptide targeting the chloroplast. D342 serves as a coordination point for dimethylallyl diphosphate. The Mg(2+) site is built by D342 and D346. The DDXXD motif motif lies at 342–346 (DDIYD). The dimethylallyl diphosphate site is built by E420, R484, and N487. Residues N487, T491, and E495 each contribute to the Mg(2+) site.

The protein belongs to the terpene synthase family. Tpsb subfamily. Requires Mg(2+) as cofactor. The cofactor is Mn(2+). In terms of tissue distribution, predominantly expressed in roots and at much lower levels in siliques. Not found in leaves, flowers or stems. Also detected in flowers in cv. Landsberg erecta. Not expressed in root apical meristem and elongation zone. Found in the vascular system of young roots and additionally in the cortex and epidermal cell layer of older roots.

Its subcellular location is the plastid. It localises to the chloroplast. The enzyme catalyses (2E)-geranyl diphosphate + H2O = 1,8-cineole + diphosphate. It functions in the pathway secondary metabolite biosynthesis; terpenoid biosynthesis. In terms of biological role, involved in monoterpene (C10) biosynthesis. The major product is 1,8-cineole (52%) followed by minor amounts of sabinene (14.5%), myrcene (13.3%), (-)-(1S)-beta-pinene (7.8%), (-)-(4S)-limonene (4.0%), (E)-beta-ocimene (2.7%), alpha-terpineol (2.4%), (-)-(1S)-alpha-pinene (1.9%), terpinolene (0.8%), and (+)-alpha-thujene (0.6%). In Arabidopsis thaliana (Mouse-ear cress), this protein is 1,8-cineole synthase 1, chloroplastic (TPS27).